Here is an 86-residue protein sequence, read N- to C-terminus: Exodeoxyribonuclease 7 small subunit (86 aa).

A disordered region spans residues 1–26; sequence MQDELFETEKAPQKNAKNAKNAPKKS.

The protein belongs to the XseB family. In terms of assembly, heterooligomer composed of large and small subunits.

It localises to the cytoplasm. It carries out the reaction Exonucleolytic cleavage in either 5'- to 3'- or 3'- to 5'-direction to yield nucleoside 5'-phosphates.. Its function is as follows. Bidirectionally degrades single-stranded DNA into large acid-insoluble oligonucleotides, which are then degraded further into small acid-soluble oligonucleotides. This Helicobacter pylori (strain J99 / ATCC 700824) (Campylobacter pylori J99) protein is Exodeoxyribonuclease 7 small subunit.